A 557-amino-acid chain; its full sequence is Dihydroxy-acid dehydratase (557 aa).

D78 contacts Mg(2+). C119 lines the [2Fe-2S] cluster pocket. Mg(2+)-binding residues include D120 and K121. At K121 the chain carries N6-carboxylysine. [2Fe-2S] cluster is bound at residue C192. E442 provides a ligand contact to Mg(2+). S468 functions as the Proton acceptor in the catalytic mechanism.

This sequence belongs to the IlvD/Edd family. As to quaternary structure, homodimer. Requires [2Fe-2S] cluster as cofactor. Mg(2+) is required as a cofactor.

The enzyme catalyses (2R)-2,3-dihydroxy-3-methylbutanoate = 3-methyl-2-oxobutanoate + H2O. The catalysed reaction is (2R,3R)-2,3-dihydroxy-3-methylpentanoate = (S)-3-methyl-2-oxopentanoate + H2O. It functions in the pathway amino-acid biosynthesis; L-isoleucine biosynthesis; L-isoleucine from 2-oxobutanoate: step 3/4. The protein operates within amino-acid biosynthesis; L-valine biosynthesis; L-valine from pyruvate: step 3/4. Functions in the biosynthesis of branched-chain amino acids. Catalyzes the dehydration of (2R,3R)-2,3-dihydroxy-3-methylpentanoate (2,3-dihydroxy-3-methylvalerate) into 2-oxo-3-methylpentanoate (2-oxo-3-methylvalerate) and of (2R)-2,3-dihydroxy-3-methylbutanoate (2,3-dihydroxyisovalerate) into 2-oxo-3-methylbutanoate (2-oxoisovalerate), the penultimate precursor to L-isoleucine and L-valine, respectively. The protein is Dihydroxy-acid dehydratase of Bacillus thuringiensis subsp. konkukian (strain 97-27).